Consider the following 176-residue polypeptide: MLRVLPTSFKSISTRSAFRACQLSPLTVYCPLKSSQGTDIKSLEDLTKLKSLEGVDPELIRKLINERTIELNVQNELEMLKNLNKQEKMSQEVSLKRFVRPLWVFFLMSSTVYLILHYVWWKLEVVEKEKELQSHVESLEMELDQTLKSQNQNVSSSQNNGNNKTNDKPWYRKWFF.

The N-terminal 28 residues, 1–28, are a transit peptide targeting the mitochondrion; the sequence is MLRVLPTSFKSISTRSAFRACQLSPLTV. Residues 29–98 lie on the Mitochondrial matrix side of the membrane; sequence YCPLKSSQGT…MSQEVSLKRF (70 aa). Residues 99 to 121 form a helical membrane-spanning segment; that stretch reads VRPLWVFFLMSSTVYLILHYVWW. Over 122-176 the chain is Mitochondrial intermembrane; that stretch reads KLEVVEKEKELQSHVESLEMELDQTLKSQNQNVSSSQNNGNNKTNDKPWYRKWFF. Residues 123-151 are a coiled coil; it reads LEVVEKEKELQSHVESLEMELDQTLKSQN. Positions 149–163 are enriched in low complexity; the sequence is SQNQNVSSSQNNGNN. The interval 149-168 is disordered; that stretch reads SQNQNVSSSQNNGNNKTNDK.

It belongs to the INA17 family. Component of the inner membrane assembly (INA) complex, composed of INA17 and INA22. Interacts with a subset of F(1)F(0)-ATP synthase subunits of the F(1)-domain and the peripheral stalk.

It localises to the mitochondrion inner membrane. In terms of biological role, component of the INA complex (INAC) that promotes the biogenesis of mitochondrial F(1)F(0)-ATP synthase. INAC facilitates the assembly of the peripheral stalk and promotes the assembly of the catalytic F(1)-domain with the membrane-embedded F(0)-domain. The protein is Inner membrane assembly complex subunit 17 of Zygosaccharomyces rouxii (strain ATCC 2623 / CBS 732 / NBRC 1130 / NCYC 568 / NRRL Y-229).